Consider the following 449-residue polypeptide: Tubulin alpha-1C chain (449 aa).

The short motif at 1–4 (MREC) is the MREC motif element. Residue Gln11 coordinates GTP. Lys40 is subject to N6-acetyllysine. Residues Glu71, Ser140, Gly144, Thr145, Thr179, Asn206, and Asn228 each contribute to the GTP site. Residue Glu71 coordinates Mg(2+). The active site involves Glu254. Tyr282 is subject to 3'-nitrotyrosine. At Tyr432 the chain carries Phosphotyrosine. Phosphoserine is present on Ser439. Tyr449 is modified (3'-nitrotyrosine).

It belongs to the tubulin family. In terms of assembly, dimer of alpha and beta chains. A typical microtubule is a hollow water-filled tube with an outer diameter of 25 nm and an inner diameter of 15 nM. Alpha-beta heterodimers associate head-to-tail to form protofilaments running lengthwise along the microtubule wall with the beta-tubulin subunit facing the microtubule plus end conferring a structural polarity. Microtubules usually have 13 protofilaments but different protofilament numbers can be found in some organisms and specialized cells. The cofactor is Mg(2+). Some glutamate residues at the C-terminus are polyglycylated, resulting in polyglycine chains on the gamma-carboxyl group. Glycylation is mainly limited to tubulin incorporated into axonemes (cilia and flagella) whereas glutamylation is prevalent in neuronal cells, centrioles, axonemes, and the mitotic spindle. Both modifications can coexist on the same protein on adjacent residues, and lowering polyglycylation levels increases polyglutamylation, and reciprocally. Cilia and flagella glycylation is required for their stability and maintenance. Flagella glycylation controls sperm motility. In terms of processing, some glutamate residues at the C-terminus are polyglutamylated, resulting in polyglutamate chains on the gamma-carboxyl group. Polyglutamylation plays a key role in microtubule severing by spastin (SPAST). SPAST preferentially recognizes and acts on microtubules decorated with short polyglutamate tails: severing activity by SPAST increases as the number of glutamates per tubulin rises from one to eight, but decreases beyond this glutamylation threshold. Glutamylation is also involved in cilia motility. Post-translationally, acetylation of alpha chains at Lys-40 is located inside the microtubule lumen. This modification has been correlated with increased microtubule stability, intracellular transport and ciliary assembly. Methylation of alpha chains at Lys-40 is found in mitotic microtubules and is required for normal mitosis and cytokinesis contributing to genomic stability. In terms of processing, nitration of Tyr-449 is irreversible and interferes with normal dynein intracellular distribution. Post-translationally, undergoes a tyrosination/detyrosination cycle, the cyclic removal and re-addition of a C-terminal tyrosine residue by the enzymes tubulin tyrosine carboxypeptidase (MATCAP1, VASH1 or VASH2) and tubulin tyrosine ligase (TTL), respectively. Tyrosination promotes microtubule interaction with CAP-Gly domain-containing proteins such as CLIP1, CLIP2 and DCTN1. Tyrosination regulates the initiation of dynein-dynactin motility via interaction with DCTN1, which brings the dynein-dynactin complex into contact with microtubules. In neurons, tyrosinated tubulins mediate the initiation of retrograde vesicle transport. In terms of processing, detyrosination is involved in metaphase plate congression by guiding chromosomes during mitosis: detyrosination promotes interaction with CENPE, promoting pole-proximal transport of chromosomes toward the equator. Detyrosination increases microtubules-dependent mechanotransduction in dystrophic cardiac and skeletal muscle. In cardiomyocytes, detyrosinated microtubules are required to resist to contractile compression during contraction: detyrosination promotes association with desmin (DES) at force-generating sarcomeres, leading to buckled microtubules and mechanical resistance to contraction.

It localises to the cytoplasm. It is found in the cytoskeleton. The enzyme catalyses GTP + H2O = GDP + phosphate + H(+). In terms of biological role, tubulin is the major constituent of microtubules, a cylinder consisting of laterally associated linear protofilaments composed of alpha- and beta-tubulin heterodimers. Microtubules grow by the addition of GTP-tubulin dimers to the microtubule end, where a stabilizing cap forms. Below the cap, tubulin dimers are in GDP-bound state, owing to GTPase activity of alpha-tubulin. This chain is Tubulin alpha-1C chain (Tuba1c), found in Rattus norvegicus (Rat).